A 371-amino-acid chain; its full sequence is Putrescine N-methyltransferase 2 (371 aa).

2 stretches are compositionally biased toward polar residues: residues 1–14 (MEVI…STIF) and 23–70 (GHQN…HDNG). The disordered stretch occupies residues 1 to 70 (MEVISTNTNG…QNGTISHDNG (70 aa)). A PABS domain is found at 82 to 319 (PGWFSEFSAL…GVIGYMLCST (238 aa)). Residues glutamine 113, glutamate 188, and 219 to 220 (DG) contribute to the S-adenosyl-L-methionine site. Aspartate 238 functions as the Proton acceptor in the catalytic mechanism. An S-adenosyl-L-methionine-binding site is contributed by tyrosine 307.

The protein belongs to the class I-like SAM-binding methyltransferase superfamily. Spermidine/spermine synthase family. In terms of tissue distribution, mainly expressed in roots.

It carries out the reaction putrescine + S-adenosyl-L-methionine = N-methylputrescine + S-adenosyl-L-homocysteine + H(+). The protein operates within alkaloid biosynthesis; nicotine biosynthesis. Functionally, involved in the biosynthesis of pyridine alkaloid natural products, leading mainly to the production of anabasine, anatabine, nicotine and nornicotine, effective deterrents against herbivores with antiparasitic and pesticide properties (neurotoxins); nornicotine serves as the precursor in the synthesis of the carcinogen compound N'-nitrosonornicotine (NNN). Methyltransferase that mediates the conversion of putrescine to N-methylputrescine. The polypeptide is Putrescine N-methyltransferase 2 (Nicotiana attenuata (Coyote tobacco)).